Reading from the N-terminus, the 696-residue chain is Polyribonucleotide nucleotidyltransferase (696 aa).

2 residues coordinate Mg(2+): D483 and D489. A KH domain is found at 550 to 609 (PRITTIWVKVDKIRDVIGSGGKNIRSVTEATGVSIDIDDTGKINIASTNKEACDLAIKMI). An S1 motif domain is found at 619 to 687 (GKLYMGTVKK…KQGKIKLSRK (69 aa)).

This sequence belongs to the polyribonucleotide nucleotidyltransferase family. Mg(2+) serves as cofactor.

Its subcellular location is the cytoplasm. The enzyme catalyses RNA(n+1) + phosphate = RNA(n) + a ribonucleoside 5'-diphosphate. Its function is as follows. Involved in mRNA degradation. Catalyzes the phosphorolysis of single-stranded polyribonucleotides processively in the 3'- to 5'-direction. This is Polyribonucleotide nucleotidyltransferase from Citrifermentans bemidjiense (strain ATCC BAA-1014 / DSM 16622 / JCM 12645 / Bem) (Geobacter bemidjiensis).